Reading from the N-terminus, the 156-residue chain is ATP synthase subunit b (156 aa).

The chain crosses the membrane as a helical span at residues leucine 7–leucine 29.

It belongs to the ATPase B chain family. In terms of assembly, F-type ATPases have 2 components, F(1) - the catalytic core - and F(0) - the membrane proton channel. F(1) has five subunits: alpha(3), beta(3), gamma(1), delta(1), epsilon(1). F(0) has three main subunits: a(1), b(2) and c(10-14). The alpha and beta chains form an alternating ring which encloses part of the gamma chain. F(1) is attached to F(0) by a central stalk formed by the gamma and epsilon chains, while a peripheral stalk is formed by the delta and b chains.

Its subcellular location is the cell inner membrane. In terms of biological role, f(1)F(0) ATP synthase produces ATP from ADP in the presence of a proton or sodium gradient. F-type ATPases consist of two structural domains, F(1) containing the extramembraneous catalytic core and F(0) containing the membrane proton channel, linked together by a central stalk and a peripheral stalk. During catalysis, ATP synthesis in the catalytic domain of F(1) is coupled via a rotary mechanism of the central stalk subunits to proton translocation. Component of the F(0) channel, it forms part of the peripheral stalk, linking F(1) to F(0). This Shewanella sp. (strain W3-18-1) protein is ATP synthase subunit b.